Here is a 260-residue protein sequence, read N- to C-terminus: Ribosome maturation factor RimP (260 aa).

Basic and acidic residues-rich tracts occupy residues 189 to 199 and 215 to 227; these read RRGRDAEREQL and AREM…PRKE. A disordered region spans residues 189–260; sequence RRGRDAEREQ…QTTSDPHQGE (72 aa). Over residues 228–242 the composition is skewed to basic residues; sequence KTAKKPLPKNTKAHR.

Belongs to the RimP family.

Its subcellular location is the cytoplasm. Required for maturation of 30S ribosomal subunits. This Afipia carboxidovorans (strain ATCC 49405 / DSM 1227 / KCTC 32145 / OM5) (Oligotropha carboxidovorans) protein is Ribosome maturation factor RimP.